Here is a 252-residue protein sequence, read N- to C-terminus: Probable oligoribonuclease (252 aa).

The region spanning 81-241 (VWIDCEMTGL…ALSDILESIG (161 aa)) is the Exonuclease domain. Residue tyrosine 202 is part of the active site.

Belongs to the oligoribonuclease family.

It is found in the cytoplasm. The protein resides in the nucleus. In terms of biological role, 3'-to-5' exoribonuclease specific for small oligoribonucleotides. The protein is Probable oligoribonuclease (rex2) of Schizosaccharomyces pombe (strain 972 / ATCC 24843) (Fission yeast).